Consider the following 84-residue polypeptide: Small ribosomal subunit protein bS20 (84 aa).

This sequence belongs to the bacterial ribosomal protein bS20 family.

Its function is as follows. Binds directly to 16S ribosomal RNA. In Azobacteroides pseudotrichonymphae genomovar. CFP2, this protein is Small ribosomal subunit protein bS20.